The following is a 419-amino-acid chain: Squalene synthase R6 (419 aa).

A helical membrane pass occupies residues 397 to 417 (TMYLVVLLLGILGVAAAVLMA).

Belongs to the phytoene/squalene synthase family. It depends on Mg(2+) as a cofactor.

The protein resides in the membrane. It carries out the reaction 2 (2E,6E)-farnesyl diphosphate + NADPH + H(+) = squalene + 2 diphosphate + NADP(+). The enzyme catalyses 2 (2E,6E)-farnesyl diphosphate + NADH + H(+) = squalene + 2 diphosphate + NAD(+). Its pathway is terpene metabolism; lanosterol biosynthesis; lanosterol from farnesyl diphosphate: step 1/3. Functionally, squalene synthase; part of the gene cluster that mediates the biosynthesis of squalestatin S1 (SQS1, also known as zaragozic acid A), a heavily oxidized fungal polyketide that offers potent cholesterol lowering activity by targeting squalene synthase (SS). Catalyzes the condensation of 2 two farnesyl pyrophosphate moieties to form squalene. The presence of a gene encoding a squalene synthase supports the identification of the cluster as being responsible for SQS1 production and suggests a likely mechanism for self-resistance. This Phoma sp. (strain ATCC 20986 / MF5453) protein is Squalene synthase R6.